Reading from the N-terminus, the 284-residue chain is Avenin-like b8 (284 aa).

An N-terminal signal peptide occupies residues 1 to 18 (MKVFILALLALAATTAIA).

It belongs to the prolamin family. Contains disulfide bonds.

Its function is as follows. Seed storage protein. Might be integrated via inter-chain disulfide bonds within the glutenin polymer. The protein is Avenin-like b8 of Triticum aestivum (Wheat).